The chain runs to 216 residues: 3-isopropylmalate dehydratase small subunit (216 aa).

It belongs to the LeuD family. LeuD type 1 subfamily. As to quaternary structure, heterodimer of LeuC and LeuD.

The catalysed reaction is (2R,3S)-3-isopropylmalate = (2S)-2-isopropylmalate. It participates in amino-acid biosynthesis; L-leucine biosynthesis; L-leucine from 3-methyl-2-oxobutanoate: step 2/4. Functionally, catalyzes the isomerization between 2-isopropylmalate and 3-isopropylmalate, via the formation of 2-isopropylmaleate. This is 3-isopropylmalate dehydratase small subunit from Cupriavidus pinatubonensis (strain JMP 134 / LMG 1197) (Cupriavidus necator (strain JMP 134)).